The following is a 206-amino-acid chain: Ribosome maturation factor RimP (206 aa).

Belongs to the RimP family.

The protein localises to the cytoplasm. Its function is as follows. Required for maturation of 30S ribosomal subunits. The sequence is that of Ribosome maturation factor RimP from Paracoccus denitrificans (strain Pd 1222).